A 126-amino-acid polypeptide reads, in one-letter code: Glycine cleavage system H protein (126 aa).

The Lipoyl-binding domain occupies 22–104 (VATIGITEYA…YEKAWMVKVE (83 aa)). The residue at position 63 (Lys-63) is an N6-lipoyllysine.

It belongs to the GcvH family. The glycine cleavage system is composed of four proteins: P, T, L and H. (R)-lipoate is required as a cofactor.

In terms of biological role, the glycine cleavage system catalyzes the degradation of glycine. The H protein shuttles the methylamine group of glycine from the P protein to the T protein. Functionally, is also involved in protein lipoylation via its role as an octanoyl/lipoyl carrier protein intermediate. This chain is Glycine cleavage system H protein, found in Staphylococcus aureus (strain JH1).